The chain runs to 504 residues: ATP synthase subunit alpha, chloroplastic (504 aa).

Residue 170–177 (GDRQTGKT) participates in ATP binding.

Belongs to the ATPase alpha/beta chains family. F-type ATPases have 2 components, CF(1) - the catalytic core - and CF(0) - the membrane proton channel. CF(1) has five subunits: alpha(3), beta(3), gamma(1), delta(1), epsilon(1). CF(0) has four main subunits: a, b, b' and c.

It is found in the plastid. The protein localises to the chloroplast thylakoid membrane. The enzyme catalyses ATP + H2O + 4 H(+)(in) = ADP + phosphate + 5 H(+)(out). Produces ATP from ADP in the presence of a proton gradient across the membrane. The alpha chain is a regulatory subunit. In Pyropia yezoensis (Susabi-nori), this protein is ATP synthase subunit alpha, chloroplastic.